A 151-amino-acid polypeptide reads, in one-letter code: S-ribosylhomocysteine lyase (151 aa).

His54, His58, and Cys121 together coordinate Fe cation.

This sequence belongs to the LuxS family. Homodimer. It depends on Fe cation as a cofactor.

It catalyses the reaction S-(5-deoxy-D-ribos-5-yl)-L-homocysteine = (S)-4,5-dihydroxypentane-2,3-dione + L-homocysteine. Involved in the synthesis of autoinducer 2 (AI-2) which is secreted by bacteria and is used to communicate both the cell density and the metabolic potential of the environment. The regulation of gene expression in response to changes in cell density is called quorum sensing. Catalyzes the transformation of S-ribosylhomocysteine (RHC) to homocysteine (HC) and 4,5-dihydroxy-2,3-pentadione (DPD). In Clostridium botulinum (strain Alaska E43 / Type E3), this protein is S-ribosylhomocysteine lyase.